The chain runs to 217 residues: Large ribosomal subunit protein uL29m (217 aa).

It belongs to the universal ribosomal protein uL29 family. Component of the mitochondrial large ribosomal subunit. Mature mitochondrial ribosomes consist of a small (37S) and a large (54S) subunit. The 37S subunit contains at least 33 different proteins and 1 molecule of RNA (15S). The 54S subunit contains at least 45 different proteins and 1 molecule of RNA (21S).

The protein localises to the mitochondrion. The sequence is that of Large ribosomal subunit protein uL29m (mrpl4) from Neosartorya fischeri (strain ATCC 1020 / DSM 3700 / CBS 544.65 / FGSC A1164 / JCM 1740 / NRRL 181 / WB 181) (Aspergillus fischerianus).